The primary structure comprises 196 residues: uncharacterized protein (196 aa).

Residues 15-22 (SQGKFNKT), 68-71 (GWWM), Tyr-107, and 123-126 (TWNA) contribute to the FAD site.

Belongs to the oxidoreductase MdaB family. FAD is required as a cofactor.

This is an uncharacterized protein from Schizosaccharomyces pombe (strain 972 / ATCC 24843) (Fission yeast).